The following is a 317-amino-acid chain: Methionyl-tRNA formyltransferase (317 aa).

Residue 112–115 (SLLP) coordinates (6S)-5,6,7,8-tetrahydrofolate.

The protein belongs to the Fmt family.

The enzyme catalyses L-methionyl-tRNA(fMet) + (6R)-10-formyltetrahydrofolate = N-formyl-L-methionyl-tRNA(fMet) + (6S)-5,6,7,8-tetrahydrofolate + H(+). In terms of biological role, attaches a formyl group to the free amino group of methionyl-tRNA(fMet). The formyl group appears to play a dual role in the initiator identity of N-formylmethionyl-tRNA by promoting its recognition by IF2 and preventing the misappropriation of this tRNA by the elongation apparatus. This is Methionyl-tRNA formyltransferase from Histophilus somni (strain 129Pt) (Haemophilus somnus).